Reading from the N-terminus, the 129-residue chain is MEKLPDLATLKYNEQGLIPAIAQQYDTGEVLMMAWMNQTSLAETLSTGVACYWSRSRNRFWRKGESSGQVQTVKAVRLDCDKDTLLLLVDQQGVACHTGRHNCFYLEAQDGSWKTITDPEIDPEELYGK.

Asp79 serves as a coordination point for Mg(2+). Position 80 (Cys80) interacts with Zn(2+). Asp81 and Asp83 together coordinate Mg(2+). Zn(2+) contacts are provided by Cys96 and Cys103.

The protein belongs to the PRA-CH family. As to quaternary structure, homodimer. Mg(2+) is required as a cofactor. The cofactor is Zn(2+).

It is found in the cytoplasm. It carries out the reaction 1-(5-phospho-beta-D-ribosyl)-5'-AMP + H2O = 1-(5-phospho-beta-D-ribosyl)-5-[(5-phospho-beta-D-ribosylamino)methylideneamino]imidazole-4-carboxamide. It participates in amino-acid biosynthesis; L-histidine biosynthesis; L-histidine from 5-phospho-alpha-D-ribose 1-diphosphate: step 3/9. In terms of biological role, catalyzes the hydrolysis of the adenine ring of phosphoribosyl-AMP. This chain is Phosphoribosyl-AMP cyclohydrolase, found in Magnetococcus marinus (strain ATCC BAA-1437 / JCM 17883 / MC-1).